The chain runs to 359 residues: S-adenosylmethionine:tRNA ribosyltransferase-isomerase (359 aa).

Belongs to the QueA family. Monomer.

Its subcellular location is the cytoplasm. It carries out the reaction 7-aminomethyl-7-carbaguanosine(34) in tRNA + S-adenosyl-L-methionine = epoxyqueuosine(34) in tRNA + adenine + L-methionine + 2 H(+). It functions in the pathway tRNA modification; tRNA-queuosine biosynthesis. Its function is as follows. Transfers and isomerizes the ribose moiety from AdoMet to the 7-aminomethyl group of 7-deazaguanine (preQ1-tRNA) to give epoxyqueuosine (oQ-tRNA). This chain is S-adenosylmethionine:tRNA ribosyltransferase-isomerase, found in Colwellia psychrerythraea (strain 34H / ATCC BAA-681) (Vibrio psychroerythus).